The following is a 327-amino-acid chain: Phenylalanine--tRNA ligase alpha subunit (327 aa).

Glutamate 252 contributes to the Mg(2+) binding site.

The protein belongs to the class-II aminoacyl-tRNA synthetase family. Phe-tRNA synthetase alpha subunit type 1 subfamily. In terms of assembly, tetramer of two alpha and two beta subunits. Mg(2+) is required as a cofactor.

It localises to the cytoplasm. The catalysed reaction is tRNA(Phe) + L-phenylalanine + ATP = L-phenylalanyl-tRNA(Phe) + AMP + diphosphate + H(+). The chain is Phenylalanine--tRNA ligase alpha subunit from Haemophilus ducreyi (strain 35000HP / ATCC 700724).